Here is a 205-residue protein sequence, read N- to C-terminus: Putative 3-methyladenine DNA glycosylase (205 aa).

This sequence belongs to the DNA glycosylase MPG family.

The protein is Putative 3-methyladenine DNA glycosylase of Bacillus cereus (strain ATCC 14579 / DSM 31 / CCUG 7414 / JCM 2152 / NBRC 15305 / NCIMB 9373 / NCTC 2599 / NRRL B-3711).